The sequence spans 428 residues: Homoserine dehydrogenase (428 aa).

NADPH contacts are provided by Phe10, Thr12, Val13, Arg44, and Lys106. Val13 lines the NAD(+) pocket. Positions 13, 44, and 106 each coordinate NADP(+). Residues Glu130, Val133, Gly135, and Ile137 each coordinate Na(+). 2 residues coordinate NADP(+): Gly188 and Glu191. Residues Glu191 and Asp202 each coordinate L-homoserine. Lys206 (proton donor) is an active-site residue. Gly303 is a binding site for NADPH. Gly303 provides a ligand contact to NAD(+). Position 303 (Gly303) interacts with NADP(+). In terms of domain architecture, ACT spans 351 to 425 (YFSVETPDST…DFKLLNYFKV (75 aa)).

Belongs to the homoserine dehydrogenase family. Requires a metal cation as cofactor.

It catalyses the reaction L-homoserine + NADP(+) = L-aspartate 4-semialdehyde + NADPH + H(+). The catalysed reaction is L-homoserine + NAD(+) = L-aspartate 4-semialdehyde + NADH + H(+). The protein operates within amino-acid biosynthesis; L-methionine biosynthesis via de novo pathway; L-homoserine from L-aspartate: step 3/3. It participates in amino-acid biosynthesis; L-threonine biosynthesis; L-threonine from L-aspartate: step 3/5. Catalyzes the conversion of L-aspartate-beta-semialdehyde (L-Asa) to L-homoserine (L-Hse), the third step in the biosynthesis of threonine and methionine from aspartate. This is Homoserine dehydrogenase (hom) from Lactococcus lactis subsp. lactis (strain IL1403) (Streptococcus lactis).